Consider the following 206-residue polypeptide: dITP/XTP pyrophosphatase (206 aa).

A substrate-binding site is contributed by 7 to 12 (SNNAKK). Asp-72 (proton acceptor) is an active-site residue. Residue Asp-72 coordinates Mg(2+). Substrate is bound by residues Ser-73, 155–158 (FGYD), Lys-182, and 187–188 (HR).

The protein belongs to the HAM1 NTPase family. Homodimer. It depends on Mg(2+) as a cofactor.

The catalysed reaction is XTP + H2O = XMP + diphosphate + H(+). The enzyme catalyses dITP + H2O = dIMP + diphosphate + H(+). It catalyses the reaction ITP + H2O = IMP + diphosphate + H(+). Pyrophosphatase that catalyzes the hydrolysis of nucleoside triphosphates to their monophosphate derivatives, with a high preference for the non-canonical purine nucleotides XTP (xanthosine triphosphate), dITP (deoxyinosine triphosphate) and ITP. Seems to function as a house-cleaning enzyme that removes non-canonical purine nucleotides from the nucleotide pool, thus preventing their incorporation into DNA/RNA and avoiding chromosomal lesions. This is dITP/XTP pyrophosphatase from Corynebacterium glutamicum (strain ATCC 13032 / DSM 20300 / JCM 1318 / BCRC 11384 / CCUG 27702 / LMG 3730 / NBRC 12168 / NCIMB 10025 / NRRL B-2784 / 534).